Consider the following 167-residue polypeptide: tRNA-specific adenosine deaminase (167 aa).

In terms of domain architecture, CMP/dCMP-type deaminase spans 6 to 117 (FSHEYWMRHA…DAKTGAAGSL (112 aa)). His57 serves as a coordination point for Zn(2+). Glu59 serves as the catalytic Proton donor. Zn(2+) contacts are provided by Cys87 and Cys90.

This sequence belongs to the cytidine and deoxycytidylate deaminase family. Homodimer. Zn(2+) serves as cofactor.

The enzyme catalyses adenosine(34) in tRNA + H2O + H(+) = inosine(34) in tRNA + NH4(+). Its function is as follows. Catalyzes the deamination of adenosine to inosine at the wobble position 34 of tRNA(Arg2). Essential for cell viability. The chain is tRNA-specific adenosine deaminase from Escherichia coli (strain K12).